A 151-amino-acid polypeptide reads, in one-letter code: Meiotically up-regulated gene 114 protein (151 aa).

It is found in the cytoplasm. Its function is as follows. Has a role in meiosis. The chain is Meiotically up-regulated gene 114 protein (mug114) from Schizosaccharomyces pombe (strain 972 / ATCC 24843) (Fission yeast).